Here is a 238-residue protein sequence, read N- to C-terminus: Outer membrane protein A (238 aa).

The next 5 beta stranded transmembrane spans lie at 1-8 (LTAKLGYP), 13-21 (LDIYTRLGG), 43-52 (PVFAGGVEYA), 57-64 (IATRLEYQ), and 83-91 (LLSVGVSYR). Tandem repeats lie at residues 104-105 (AP), 106-107 (AP), and 108-109 (AP). Residues 104-109 (APAPAP) are 3 X 2 AA tandem repeats of A-P. The 128-residue stretch at 111 to 238 (VQTKHFTLKS…RRVEIEVKGI (128 aa)) folds into the OmpA-like domain. Cysteine 212 and cysteine 224 form a disulfide bridge.

This sequence belongs to the outer membrane OOP (TC 1.B.6) superfamily. OmpA family. As to quaternary structure, monomer and homodimer.

It is found in the cell outer membrane. In terms of biological role, with TolR probably plays a role in maintaining the position of the peptidoglycan cell wall in the periplasm. Acts as a porin with low permeability that allows slow penetration of small solutes; an internal gate slows down solute passage. This Citrobacter freundii protein is Outer membrane protein A.